A 626-amino-acid chain; its full sequence is MARIPEEVIDQVRNQADIVDIIGNYVQLKKQGRNYSGLCPFHGEKTPSFSVSPEKQIFHCFGCGKGGNVFSFLMEHDGLTFVESVKKVADMSHLDVDIELPEERDTSNLPKETSETAKMVEMHQLTAKLYHYILMETEEGAAALTYLKERGMSEQMMASFQIGFAPNHHATITSFLEKRGMDLQLAGTAGLLSERDDGQMVDRFRNRIMFPITNDRGQINAFSGRLFDRDDGPKYLNSPETPIFNKRRTLFHFSEARQAIRKQEEITLMEGFMDVISAEEAGVQNAVASMGTSLTEEHADLIKRLTNRAIICYDGDRAGIEAAYKAGTLLVERNRLDVFVLQLPAGKDPDDFIRASGADKFKEIYKQQRMTWTAFKINYLRKERNLQNETDKIAYIDDCLREIAKLDQAVERELYLKQLADEFELTIETLKQQLQQSLKNTHKERQNHSYNEPPIDDSFMGMIPQEDSEMLFSFEQPTKKLSAHTTAEQQLMKAMMENRDSFLLIKQLLGDTEFYHDNYQALYTYLIGYFAEGNDADPHKFMDSVPDAGMKGLISSLEMVISPDEQGKTQFEDYIKSLKRFKLEQAKKELEQQLAAFNRENDKENEIRVMLEIVQLNRKLNSGQLD.

The segment at 39-63 adopts a CHC2-type zinc-finger fold; it reads CPFHGEKTPSFSVSPEKQIFHCFGC. The 83-residue stretch at 264–346 folds into the Toprim domain; it reads EEITLMEGFM…DVFVLQLPAG (83 aa). Mg(2+) contacts are provided by glutamate 270, aspartate 314, and aspartate 316.

The protein belongs to the DnaG primase family. In terms of assembly, monomer. Interacts with DnaB. Zn(2+) serves as cofactor. Requires Mg(2+) as cofactor.

The catalysed reaction is ssDNA + n NTP = ssDNA/pppN(pN)n-1 hybrid + (n-1) diphosphate.. Functionally, RNA polymerase that catalyzes the synthesis of short RNA molecules used as primers for DNA polymerase during DNA replication. This chain is DNA primase, found in Listeria innocua serovar 6a (strain ATCC BAA-680 / CLIP 11262).